Reading from the N-terminus, the 353-residue chain is Tetraacyldisaccharide 4'-kinase (353 aa).

T49–T56 contributes to the ATP binding site.

The protein belongs to the LpxK family.

The enzyme catalyses a lipid A disaccharide + ATP = a lipid IVA + ADP + H(+). It functions in the pathway glycolipid biosynthesis; lipid IV(A) biosynthesis; lipid IV(A) from (3R)-3-hydroxytetradecanoyl-[acyl-carrier-protein] and UDP-N-acetyl-alpha-D-glucosamine: step 6/6. Transfers the gamma-phosphate of ATP to the 4'-position of a tetraacyldisaccharide 1-phosphate intermediate (termed DS-1-P) to form tetraacyldisaccharide 1,4'-bis-phosphate (lipid IVA). This is Tetraacyldisaccharide 4'-kinase from Chlorobium phaeovibrioides (strain DSM 265 / 1930) (Prosthecochloris vibrioformis (strain DSM 265)).